The sequence spans 544 residues: Chaperonin GroEL (544 aa).

ATP contacts are provided by residues threonine 29–proline 32, lysine 50, aspartate 86–threonine 90, glycine 414, asparagine 477–valine 479, and aspartate 493.

Belongs to the chaperonin (HSP60) family. Forms a cylinder of 14 subunits composed of two heptameric rings stacked back-to-back. Interacts with the co-chaperonin GroES.

The protein resides in the cytoplasm. It carries out the reaction ATP + H2O + a folded polypeptide = ADP + phosphate + an unfolded polypeptide.. Together with its co-chaperonin GroES, plays an essential role in assisting protein folding. The GroEL-GroES system forms a nano-cage that allows encapsulation of the non-native substrate proteins and provides a physical environment optimized to promote and accelerate protein folding. The polypeptide is Chaperonin GroEL (Campylobacter curvus (strain 525.92)).